The chain runs to 243 residues: Adenosine 5'-phosphosulfate reductase (243 aa).

The [4Fe-4S] cluster site is built by cysteine 126, cysteine 127, cysteine 209, and cysteine 212. Cysteine 235 acts as the Nucleophile; cysteine thiosulfonate intermediate in catalysis.

This sequence belongs to the PAPS reductase family. CysH subfamily. The cofactor is [4Fe-4S] cluster.

The protein localises to the cytoplasm. It catalyses the reaction [thioredoxin]-disulfide + sulfite + AMP + 2 H(+) = adenosine 5'-phosphosulfate + [thioredoxin]-dithiol. It participates in sulfur metabolism; hydrogen sulfide biosynthesis; sulfite from sulfate. In terms of biological role, catalyzes the formation of sulfite from adenosine 5'-phosphosulfate (APS) using thioredoxin as an electron donor. This Staphylococcus epidermidis (strain ATCC 35984 / DSM 28319 / BCRC 17069 / CCUG 31568 / BM 3577 / RP62A) protein is Adenosine 5'-phosphosulfate reductase.